The chain runs to 404 residues: Phosphopentomutase (404 aa).

Mn(2+)-binding residues include aspartate 10, aspartate 303, histidine 308, aspartate 344, histidine 345, and histidine 356.

It belongs to the phosphopentomutase family. Mn(2+) is required as a cofactor.

It is found in the cytoplasm. The catalysed reaction is 2-deoxy-alpha-D-ribose 1-phosphate = 2-deoxy-D-ribose 5-phosphate. It carries out the reaction alpha-D-ribose 1-phosphate = D-ribose 5-phosphate. The protein operates within carbohydrate degradation; 2-deoxy-D-ribose 1-phosphate degradation; D-glyceraldehyde 3-phosphate and acetaldehyde from 2-deoxy-alpha-D-ribose 1-phosphate: step 1/2. Functionally, isomerase that catalyzes the conversion of deoxy-ribose 1-phosphate (dRib-1-P) and ribose 1-phosphate (Rib-1-P) to deoxy-ribose 5-phosphate (dRib-5-P) and ribose 5-phosphate (Rib-5-P), respectively. The polypeptide is Phosphopentomutase (Shewanella baltica (strain OS185)).